The following is a 389-amino-acid chain: Putative teichuronic acid biosynthesis glycosyltransferase TuaC (389 aa).

This sequence belongs to the glycosyltransferase group 1 family. Glycosyltransferase 4 subfamily.

It functions in the pathway cell wall biogenesis; teichuronic acid biosynthesis. The sequence is that of Putative teichuronic acid biosynthesis glycosyltransferase TuaC (tuaC) from Bacillus subtilis (strain 168).